Here is a 649-residue protein sequence, read N- to C-terminus: Lysophospholipase (649 aa).

An N-terminal signal peptide occupies residues 1-21; the sequence is MNLKEWLLFSDAVFFAQGTLA. N-linked (GlcNAc...) asparagine glycans are attached at residues N32, N51, N77, N90, N121, N158, N168, N213, N275, N343, N386, N457, N487, N511, N539, N563, and N580. In terms of domain architecture, PLA2c spans 34–584; the sequence is SCDEDINLIR…TNYCWNGTID (551 aa).

The protein belongs to the lysophospholipase family.

The protein localises to the secreted. It catalyses the reaction a 1-acyl-sn-glycero-3-phosphocholine + H2O = sn-glycerol 3-phosphocholine + a fatty acid + H(+). In terms of biological role, catalyzes the release of fatty acids from lysophospholipids. This is Lysophospholipase from Torulaspora delbrueckii (Yeast).